Reading from the N-terminus, the 40-residue chain is Beta/delta-ctenitoxin-Pr1a (40 aa).

Cystine bridges form between cysteine 1–cysteine 15, cysteine 8–cysteine 21, cysteine 14–cysteine 31, and cysteine 23–cysteine 29.

Belongs to the neurotoxin 03 (Tx2) family. 05 subfamily. As to expression, expressed by the venom gland.

It is found in the secreted. Functionally, potent insecticidal toxin that binds to two distinct sites in insect sodium channels, with close affinity (Kd1=34.7 pM and Kd2=35.1 pM). Its association is rather fast (1.4 and 8.5 minutes, respectively for sites 1 and 2) and its dissociation is a slower process (5.4 and 32.8 minutes, respectively). On rat brain synaptosomes the toxin partially competes (~30%) with the beta-toxin CssIV, but does not compete with the alpha-toxin AaII, nor with the beta-toxin Ts VII. On cockroach nerve cord synaptosomes, the toxin does not compete with the anti-insect toxin LqqIT1, but it competes with the 'alpha-like' toxin BomIV (IC(50)=80 pM). In cockroach neurons, the toxin inhibits the inactivation of sodium channels and it shifts the sodium channel activation to hyperpolarizing potentials. Hence, it behaves like an 'alpha-like' toxin and binds preferentially to site 3 on the insect Nav channel, located on the domain IV. The toxin may also inhibit the N-methyl-D-aspartate (NMDA)-subtype of ionotropic glutamate receptor (GRIN). In vivo, the toxin causes excitatory effects on insects. The sequence is that of Beta/delta-ctenitoxin-Pr1a from Phoneutria reidyi (Brazilian Amazonian armed spider).